The chain runs to 35 residues: Bacteriocin lactococcin-G subunit beta (35 aa).

Bacteriocin activity requires interaction of alpha and beta peptides in a molar ratio of 7:1 or 8:1 respectively.

Its function is as follows. Kills Lactococci. In Lactococcus lactis subsp. lactis (Streptococcus lactis), this protein is Bacteriocin lactococcin-G subunit beta.